A 638-amino-acid polypeptide reads, in one-letter code: Zona pellucida sperm-binding protein 1 (638 aa).

A signal peptide spans 1 to 25 (MAGGSATTWGYPVALLLLVATLGLG). The Extracellular segment spans residues 26 to 601 (RWLQPDPGLP…DSNGNSSLRP (576 aa)). The N-linked (GlcNAc...) asparagine glycan is linked to N76. Residues 165-175 (LPTSGHTSQGS) show a composition bias toward polar residues. The disordered stretch occupies residues 165–208 (LPTSGHTSQGSGHAFPSPLDPGHSSVHPTPALPSPGPGPTLATL). The P-type domain maps to 234–274 (EQCQVASGHLPCIVRRTSKEACQQAGCCYDNTREVPCYYGN). Cystine bridges form between C236/C261, C245/C260, and C255/C270. The ZP domain maps to 279–553 (QCFRDGYFVL…TACSTGTTRQ (275 aa)). N379 carries N-linked (GlcNAc...) asparagine glycosylation. A disulfide bridge links C457 with C478. A disordered region spans residues 549–594 (GTTRQRRSSGHRNDTARPQDIVSSPGPVGFEDSYGQEPTLGPTDSN). Residues 554 to 638 (RRSSGHRNDT…AQKLWESNRQ (85 aa)) constitute a propeptide, removed in mature form. N561 and N596 each carry an N-linked (GlcNAc...) asparagine glycan. A helical membrane pass occupies residues 602-622 (LLWAVLLLPAVALVLGFGVFV). Residues 623-638 (GLSQTWAQKLWESNRQ) are Cytoplasmic-facing.

It belongs to the ZP domain family. ZPB subfamily. In terms of assembly, polymers of ZP2 and ZP3 organized into long filaments cross-linked by ZP1 homodimers. Interacts with ZP3. In terms of processing, proteolytically cleaved before the transmembrane segment to yield the secreted ectodomain incorporated in the zona pellucida. O-glycosylated. Expressed in oocytes (at protein level).

It is found in the zona pellucida. The protein localises to the cell membrane. Component of the zona pellucida, an extracellular matrix surrounding oocytes which mediates sperm binding, induction of the acrosome reaction and prevents post-fertilization polyspermy. The zona pellucida is composed of 3 to 4 glycoproteins, ZP1, ZP2, ZP3, and ZP4. ZP1 ensures the structural integrity of the zona pellucida. This chain is Zona pellucida sperm-binding protein 1 (ZP1), found in Homo sapiens (Human).